We begin with the raw amino-acid sequence, 446 residues long: D-inositol 3-phosphate glycosyltransferase (446 aa).

Histidine 19 is a binding site for 1D-myo-inositol 3-phosphate. Residues 25–26 (QP) and glycine 33 each bind UDP-N-acetyl-alpha-D-glucosamine. Residues 30–35 (DAGGMN), lysine 88, tyrosine 121, threonine 145, and arginine 165 contribute to the 1D-myo-inositol 3-phosphate site. UDP-N-acetyl-alpha-D-glucosamine is bound by residues arginine 239, lysine 244, and glutamine 303. Mg(2+) is bound by residues tyrosine 312, arginine 313, and serine 315. 2 residues coordinate UDP-N-acetyl-alpha-D-glucosamine: glutamate 325 and glutamate 333. Threonine 339 contributes to the Mg(2+) binding site.

This sequence belongs to the glycosyltransferase group 1 family. MshA subfamily. As to quaternary structure, homodimer.

It catalyses the reaction 1D-myo-inositol 3-phosphate + UDP-N-acetyl-alpha-D-glucosamine = 1D-myo-inositol 2-acetamido-2-deoxy-alpha-D-glucopyranoside 3-phosphate + UDP + H(+). Its function is as follows. Catalyzes the transfer of a N-acetyl-glucosamine moiety to 1D-myo-inositol 3-phosphate to produce 1D-myo-inositol 2-acetamido-2-deoxy-glucopyranoside 3-phosphate in the mycothiol biosynthesis pathway. In Rhodococcus opacus (strain B4), this protein is D-inositol 3-phosphate glycosyltransferase.